Reading from the N-terminus, the 201-residue chain is Ribosome maturation factor RimP (201 aa).

It belongs to the RimP family.

The protein resides in the cytoplasm. In terms of biological role, required for maturation of 30S ribosomal subunits. The protein is Ribosome maturation factor RimP of Acidobacterium capsulatum (strain ATCC 51196 / DSM 11244 / BCRC 80197 / JCM 7670 / NBRC 15755 / NCIMB 13165 / 161).